Reading from the N-terminus, the 254-residue chain is PF03932 family protein CutC (254 aa).

The protein belongs to the CutC family.

The protein resides in the cytoplasm. This Yersinia pseudotuberculosis serotype O:1b (strain IP 31758) protein is PF03932 family protein CutC.